A 189-amino-acid chain; its full sequence is Parkinson disease protein 7 homolog (189 aa).

Residues C46 and C53 are each lipidated (S-palmitoyl cysteine). Y67 is modified (phosphotyrosine). C106 carries S-palmitoyl cysteine lipidation. C106 (nucleophile) is an active-site residue. C106 is modified (cysteine sulfinic acid (-SO2H)). C106 is modified (cysteine sulfinic acid (-SO2H); alternate). A lipid anchor (S-palmitoyl cysteine; alternate) is attached at C106. H126 is an active-site residue. Residue K130 forms a Glycyl lysine isopeptide (Lys-Gly) (interchain with G-Cter in SUMO) linkage. K148 carries the post-translational modification N6-acetyllysine. N6-succinyllysine is present on K182.

This sequence belongs to the peptidase C56 family. As to quaternary structure, homodimer. Requires Deglycase activity does not require glutathione as a cofactor, however, glycated glutathione constitutes a PARK7 substrate. as cofactor. Sumoylated on Lys-130 by pias2 or pias4; which is essential for cell-growth promoting activity and transforming activity. Post-translationally, undergoes cleavage of a C-terminal peptide and subsequent activation of protease activity in response to oxidative stress. As to expression, larval brain and gut from 96 hours post-fertilization (hpf). Ubiquitous in adult; most abundant in brain, eye, heart and muscle. Within brain, neuronal expression is widespread, particularly in the cerebellum, medullary reticular formation and diencephalon. Expressed in major forebrain and diencephalic dopaminergic cell groups.

The protein resides in the cell membrane. It localises to the cytoplasm. The protein localises to the nucleus. It is found in the membrane raft. Its subcellular location is the mitochondrion. The protein resides in the endoplasmic reticulum. The enzyme catalyses N(omega)-(1-hydroxy-2-oxopropyl)-L-arginyl-[protein] + H2O = lactate + L-arginyl-[protein] + H(+). The catalysed reaction is N(6)-(1-hydroxy-2-oxopropyl)-L-lysyl-[protein] + H2O = lactate + L-lysyl-[protein] + H(+). It catalyses the reaction S-(1-hydroxy-2-oxopropyl)-L-cysteinyl-[protein] + H2O = lactate + L-cysteinyl-[protein] + H(+). It carries out the reaction N(omega)-(1-hydroxy-2-oxoethyl)-L-arginyl-[protein] + H2O = L-arginyl-[protein] + glycolate + H(+). The enzyme catalyses N(6)-(1-hydroxy-2-oxoethyl)-L-lysyl-[protein] + H2O = glycolate + L-lysyl-[protein] + H(+). The catalysed reaction is S-(1-hydroxy-2-oxoethyl)-L-cysteinyl-[protein] + H2O = glycolate + L-cysteinyl-[protein] + H(+). It catalyses the reaction N(2)-(1-hydroxy-2-oxopropyl)-dGTP + H2O = lactate + dGTP + H(+). It carries out the reaction N(2)-(1-hydroxy-2-oxopropyl)-GTP + H2O = lactate + GTP + H(+). The enzyme catalyses N(2)-(1-hydroxy-2-oxopropyl)-GDP + H2O = lactate + GDP + H(+). The catalysed reaction is N(2)-(1-hydroxy-2-oxopropyl)-GMP + H2O = lactate + GMP + H(+). It catalyses the reaction N(2)-(1-hydroxy-2-oxoethyl)-dGTP + H2O = dGTP + glycolate + H(+). It carries out the reaction N(2)-(1-hydroxy-2-oxoethyl)-GTP + H2O = glycolate + GTP + H(+). The enzyme catalyses N(2)-(1-hydroxy-2-oxoethyl)-GDP + H2O = glycolate + GDP + H(+). The catalysed reaction is N(2)-(1-hydroxy-2-oxoethyl)-GMP + H2O = glycolate + GMP + H(+). It catalyses the reaction an N(2)-(1-hydroxy-2-oxopropyl)-guanosine in RNA + H2O = a guanosine in RNA + lactate + H(+). It carries out the reaction an N(2)-(1-hydroxy-2-oxopropyl)-2'-deoxyguanosine in DNA + H2O = a 2'-deoxyguanosine in DNA + lactate + H(+). The enzyme catalyses an N(2)-(1-hydroxy-2-oxoethyl)-guanosine in RNA + H2O = a guanosine in RNA + glycolate + H(+). The catalysed reaction is an N(2)-(1-hydroxy-2-oxoethyl)-2'-deoxyguanosine in DNA + H2O = a 2'-deoxyguanosine in DNA + glycolate + H(+). Multifunctional protein with controversial molecular function which plays an important role in cell protection against oxidative stress and cell death acting as oxidative stress sensor and redox-sensitive chaperone and protease. It is involved in neuroprotective mechanisms like the stabilization of NFE2L2 and PINK1 proteins, male fertility as a positive regulator of androgen signaling pathway as well as cell growth and transformation through, for instance, the modulation of NF-kappa-B signaling pathway. Has been described as a protein and nucleotide deglycase that catalyzes the deglycation of the Maillard adducts formed between amino groups of proteins or nucleotides and reactive carbonyl groups of glyoxals. But this function is rebuted by other works. As a protein deglycase, repairs methylglyoxal- and glyoxal-glycated proteins, and releases repaired proteins and lactate or glycolate, respectively. Deglycates cysteine, arginine and lysine residues in proteins, and thus reactivates these proteins by reversing glycation by glyoxals. Acts on early glycation intermediates (hemithioacetals and aminocarbinols), preventing the formation of advanced glycation endproducts (AGE) that cause irreversible damage. Also functions as a nucleotide deglycase able to repair glycated guanine in the free nucleotide pool (GTP, GDP, GMP, dGTP) and in DNA and RNA. Is thus involved in a major nucleotide repair system named guanine glycation repair (GG repair), dedicated to reversing methylglyoxal and glyoxal damage via nucleotide sanitization and direct nucleic acid repair. Protects histones from adduction by methylglyoxal, controls the levels of methylglyoxal-derived argininine modifications on chromatin. Displays a very low glyoxalase activity that may reflect its deglycase activity. It is involved in neuroprotective mechanisms as well as cell growth and transformation. Its involvement in protein repair could also explain other unrelated functions. Eliminates hydrogen peroxide and protects cells against hydrogen peroxide-induced cell death. Required for correct mitochondrial morphology and function as well as for autophagy of dysfunctional mitochondria. Regulates astrocyte inflammatory responses, may modulate lipid rafts-dependent endocytosis in astrocytes and neuronal cells. Binds to a number of mRNAs containing multiple copies of GG or CC motifs and partially inhibits their translation but dissociates following oxidative stress. Metal-binding protein able to bind copper as well as toxic mercury ions, enhances the cell protection mechanism against induced metal toxicity. This Danio rerio (Zebrafish) protein is Parkinson disease protein 7 homolog.